The sequence spans 383 residues: uncharacterized protein (383 aa).

The signal sequence occupies residues 1–23 (MKLTSIPIASTLLSLLAASGTLA).

This sequence belongs to the but2 family.

It is found in the cytoplasm. The protein resides in the nucleus. This is an uncharacterized protein from Schizosaccharomyces pombe (strain 972 / ATCC 24843) (Fission yeast).